A 539-amino-acid chain; its full sequence is Eukaryotic translation initiation factor 3 subunit L (539 aa).

A PCI domain is found at 306 to 514; the sequence is TFSDILLYIQ…IHIADTKVSH (209 aa).

Belongs to the eIF-3 subunit L family. Component of the eukaryotic translation initiation factor 3 (eIF-3) complex. The eIF-3 complex interacts with pix.

Its subcellular location is the cytoplasm. Its function is as follows. Component of the eukaryotic translation initiation factor 3 (eIF-3) complex, which is involved in protein synthesis of a specialized repertoire of mRNAs and, together with other initiation factors, stimulates binding of mRNA and methionyl-tRNAi to the 40S ribosome. The eIF-3 complex specifically targets and initiates translation of a subset of mRNAs involved in cell proliferation. The polypeptide is Eukaryotic translation initiation factor 3 subunit L (Drosophila ananassae (Fruit fly)).